Consider the following 793-residue polypeptide: Sucrose synthase (793 aa).

The interval 259–738 is GT-B glycosyltransferase; it reads MILNIAIISP…AIKRVTEKYS (480 aa).

It belongs to the glycosyltransferase 1 family. In terms of assembly, homotetramer.

It catalyses the reaction an NDP-alpha-D-glucose + D-fructose = a ribonucleoside 5'-diphosphate + sucrose + H(+). Catalyzes the reversible conversion of sucrose and a nucleotide disphosphate (NDP) into fructose and NDP-glucose; although the reaction is freely reversible in vitro, the physiological reaction seems to be sucrose cleavage. Unlike characterized plant enzymes prefers ADP as a cosubstrate, whereas plants prefer UDP. Its preference for ADP over UDP suggests it may directly link sucrose and glycogen metabolism. This chain is Sucrose synthase, found in Melioribacter roseus (strain JCM 17771 / P3M-2).